We begin with the raw amino-acid sequence, 3061 residues long: Genome polyprotein (3061 aa).

Residues 141–284 (KLTEGQMNHL…QGVMDSMVQF (144 aa)) form the Peptidase S30 domain. Residues His192, Asp201, and Ser235 each act as for P1 proteinase activity in the active site. Residues 334–337 (KITC) carry the Involved in interaction with stylet and aphid transmission motif. The Involved in virions binding and aphid transmission motif lies at 592–594 (PTK). Residues 618-740 (LYIARQGFCY…ESDIKHYRVG (123 aa)) enclose the Peptidase C6 domain. Catalysis depends on for helper component proteinase activity residues Cys626 and His699. Positions 1229–1381 (DIAHSEHLDF…TQQPVKLIVE (153 aa)) constitute a Helicase ATP-binding domain. Position 1242 to 1249 (1242 to 1249 (GAVGSGKS)) interacts with ATP. A DECH box motif is present at residues 1331-1334 (DECH). The 160-residue stretch at 1400–1559 (DVVQFGSNVL…NLPVMTGGVS (160 aa)) folds into the Helicase C-terminal domain. Residues 1884–1892 (RKKGKGKGT) carry the Nuclear localization signal motif. O-(5'-phospho-RNA)-tyrosine is present on Tyr1907. Residues 2032–2250 (AKSLMRGLRD…VLWGPLKLKE (219 aa)) form the Peptidase C4 domain. Catalysis depends on for nuclear inclusion protein A activity residues His2077, Asp2112, and Cys2182. A RdRp catalytic domain is found at 2517–2641 (WVYCDADGSQ…AVNPEKESIL (125 aa)). The disordered stretch occupies residues 2795–2835 (GNDTIDAGGSTKKDAKQEQGSIQPNLNKEKEKDVNVGTSGT). Residue Thr3044 is modified to Phosphothreonine.

Belongs to the potyviridae genome polyprotein family. Interacts with host eIF4E protein (via cap-binding region); this interaction mediates the translation of the VPg-viral RNA conjugates. Part of a complex that comprises VPg, RNA, host EIF4E and EIF4G; this interaction mediates the translation of the VPg-viral RNA conjugates. Post-translationally, VPg is uridylylated by the polymerase and is covalently attached to the 5'-end of the genomic RNA. This uridylylated form acts as a nucleotide-peptide primer for the polymerase. Potyviral RNA is expressed as two polyproteins which undergo post-translational proteolytic processing. Genome polyprotein is processed by NIa-pro, P1 and HC-pro proteinases resulting in the production of at least ten individual proteins. P3N-PIPO polyprotein is cleaved by P1 and HC-pro proteinases resulting in the production of three individual proteins. The P1 proteinase and the HC-pro cleave only their respective C-termini autocatalytically. 6K1 is essential for proper proteolytic separation of P3 from CI.

It localises to the host cytoplasmic vesicle. The protein resides in the host nucleus. Its subcellular location is the virion. The catalysed reaction is RNA(n) + a ribonucleoside 5'-triphosphate = RNA(n+1) + diphosphate. It carries out the reaction Hydrolyzes glutaminyl bonds, and activity is further restricted by preferences for the amino acids in P6 - P1' that vary with the species of potyvirus, e.g. Glu-Xaa-Xaa-Tyr-Xaa-Gln-|-(Ser or Gly) for the enzyme from tobacco etch virus. The natural substrate is the viral polyprotein, but other proteins and oligopeptides containing the appropriate consensus sequence are also cleaved.. It catalyses the reaction Hydrolyzes a Gly-|-Gly bond at its own C-terminus, commonly in the sequence -Tyr-Xaa-Val-Gly-|-Gly, in the processing of the potyviral polyprotein.. Required for aphid transmission and also has proteolytic activity. Only cleaves a Gly-Gly dipeptide at its own C-terminus. Interacts with virions and aphid stylets. Acts as a suppressor of RNA-mediated gene silencing, also known as post-transcriptional gene silencing (PTGS), a mechanism of plant viral defense that limits the accumulation of viral RNAs. May have RNA-binding activity. In terms of biological role, has helicase activity. It may be involved in replication. Its function is as follows. Indispensable for virus replication. Reduces the abundance of host transcripts related to jasmonic acid biosynthesis therefore altering the host defenses. In order to increase its own stability, decreases host protein degradation pathways. Functionally, indispensable for virus replication. Mediates the cap-independent, EIF4E-dependent translation of viral genomic RNAs. Binds to the cap-binding site of host EIF4E and thus interferes with the host EIF4E-dependent mRNA export and translation. VPg-RNA directly binds EIF4E and is a template for transcription. Also forms trimeric complexes with EIF4E-EIF4G, which are templates for translation. In terms of biological role, has RNA-binding and proteolytic activities. Its function is as follows. An RNA-dependent RNA polymerase that plays an essential role in the virus replication. Functionally, involved in aphid transmission, cell-to-cell and systemis movement, encapsidation of the viral RNA and in the regulation of viral RNA amplification. The polypeptide is Genome polyprotein (Potato virus Y (strain Hungarian) (PVY)).